We begin with the raw amino-acid sequence, 113 residues long: Dynein light chain Tctex-type 1 (113 aa).

Methionine 1 is subject to N-acetylmethionine. The tract at residues 41-113 (QWTTNVVEQT…CIVSAFGLSI (73 aa)) is interaction with GNB1.

The protein belongs to the dynein light chain Tctex-type family. As to quaternary structure, homodimer. The cytoplasmic dynein 1 complex consists of two catalytic heavy chains (HCs) and a number of non-catalytic subunits presented by intermediate chains (ICs), light intermediate chains (LICs) and light chains (LCs); the composition seems to vary in respect to the IC, LIC and LC composition. The heavy chain homodimer serves as a scaffold for the probable homodimeric assembly of the non-catalytic subunits. The ICs and LICs bind directly to the HC dimer and the LCs assemble on the IC dimer. DYNLT1 and DYNLT3 compete for association with dynein IC (DYNC1I1 or DYNC1I2). Self-associates. Interacts with RHO. Interacts with DYNC1I1 and DYNC1I2. Interacts with DOC2A, DOC2B and SCN10A. Interacts with PVR. Interacts with SVIL isoform 2. Interacts with GNB1; the interaction occurs in presence of guanine nucleotide-binding protein G(T) subunit gamma; the interaction diminishes the association of DYNLT1 with dynein IC (DYNC1I1 or DYNC1I2). Interacts with GNB2, GNB3 and GNB5; the interactions occur in presence of guanine nucleotide-binding protein G(T) subunit gamma. Interacts with ACVR2B and ARHGEF2. Interacts with DNAI4. Interacts with CFAP61. Phosphorylated by BMPR2. The phosphorylation status is proposed to regulate the association with the cytoplasmic dynein complex and may have role in cytoplasmic dynein cargo release.

The protein resides in the golgi apparatus. The protein localises to the cytoplasm. Its subcellular location is the cytoskeleton. It is found in the spindle. Its function is as follows. Acts as one of several non-catalytic accessory components of the cytoplasmic dynein 1 complex that are thought to be involved in linking dynein to cargos and to adapter proteins that regulate dynein function. Cytoplasmic dynein 1 acts as a motor for the intracellular retrograde motility of vesicles and organelles along microtubules. Binds to transport cargos and is involved in apical cargo transport such as rhodopsin-bearing vesicles in polarized epithelia. May also be a accessory component of axonemal dynein. Plays a role in neuronal morphogenesis; the function is independent of cytoplasmic dynein and seems to be coupled to regulation of the actin cytoskeleton by enhancing Rac1 activity. The function in neurogenesis may be regulated by association with a G-protein beta-gamma dimer. May function as a receptor-independent activator of heterotrimeric G-protein signaling; the activation appears to be independent of a nucleotide exchange. Plays a role in regulating neurogenesis; inhibits the genesis of neurons from precursor cells during cortical development presumably by antagonizing ARHGEF2. Involved in the regulation of mitotic spindle orientation. Unrelated to the role in retrograde microtubule-associated movement may play a role in the dimerization of cytoplasmic proteins/domains such as for ACVR2B. Binds to the cytoplasmic domain of ACVR2B and, in vitro, inhibits ACVR2B signaling. This is Dynein light chain Tctex-type 1 (DYNLT1) from Bos taurus (Bovine).